Consider the following 652-residue polypeptide: Acetyl-coenzyme A synthetase (652 aa).

Residues 191 to 194 (RAGR), threonine 311, and asparagine 335 contribute to the CoA site. Residues 387–389 (GEP), 411–416 (DTWWQT), aspartate 500, and arginine 515 contribute to the ATP site. A CoA-binding site is contributed by serine 523. Position 526 (arginine 526) interacts with ATP. Mg(2+)-binding residues include valine 537, histidine 539, and isoleucine 542. Arginine 584 serves as a coordination point for CoA. Lysine 609 carries the N6-acetyllysine; by autocatalysis modification.

It belongs to the ATP-dependent AMP-binding enzyme family. In terms of assembly, forms a 1:1 complex with CobB/NAD-dependent deacetylase. Mg(2+) serves as cofactor. Post-translationally, autoacetylated. Deacetylation by CobB activates the enzyme.

The catalysed reaction is acetate + ATP + CoA = acetyl-CoA + AMP + diphosphate. In terms of biological role, catalyzes the conversion of acetate into acetyl-CoA (AcCoA), an essential intermediate at the junction of anabolic and catabolic pathways. Acs undergoes a two-step reaction. In the first half reaction, Acs combines acetate with ATP to form acetyl-adenylate (AcAMP) intermediate. In the second half reaction, it can then transfer the acetyl group from AcAMP to the sulfhydryl group of CoA, forming the product AcCoA. Functionally, enables the cell to use acetate during aerobic growth to generate energy via the TCA cycle, and biosynthetic compounds via the glyoxylate shunt. Acetylates CheY, the response regulator involved in flagellar movement and chemotaxis. This Escherichia coli (strain K12) protein is Acetyl-coenzyme A synthetase.